Reading from the N-terminus, the 1595-residue chain is A disintegrin and metalloproteinase with thrombospondin motifs 7 (1595 aa).

The N-terminal stretch at 1 to 20 is a signal peptide; it reads MHRGLNLLLILCALAPHVLG. A propeptide spanning residues 21–217 is cleaved from the precursor; the sequence is PASGLPTEGR…QRQQKRRQQR (197 aa). N-linked (GlcNAc...) asparagine glycans are attached at residues asparagine 84 and asparagine 105. The tract at residues 165-218 is disordered; the sequence is PGHAQPHMVYKHKRSGQQDDSRTSGTCGVQGSPELKHQREHWEQRQQKRRQQRS. A Cysteine switch motif is present at residues 189–196; sequence GTCGVQGS. Cysteine 191 serves as a coordination point for Zn(2+). Basic and acidic residues predominate over residues 198-210; the sequence is ELKHQREHWEQRQ. A Peptidase M12B domain is found at 223–434; sequence KWVETLVVAD…GWGLCLDDRP (212 aa). 11 disulfides stabilise this stretch: cysteine 299/cysteine 353, cysteine 328/cysteine 335, cysteine 347/cysteine 429, cysteine 386/cysteine 413, cysteine 456/cysteine 479, cysteine 467/cysteine 485, cysteine 474/cysteine 504, cysteine 498/cysteine 509, cysteine 532/cysteine 569, cysteine 536/cysteine 574, and cysteine 547/cysteine 559. Residue histidine 369 participates in Zn(2+) binding. The active site involves glutamate 370. Histidine 373 and histidine 379 together coordinate Zn(2+). The Disintegrin domain occupies 444-519; it reads VLPGVLYDVN…VPEGFQPETV (76 aa). The TSP type-1 1 domain occupies 520–575; sequence DGGWSGWSAWSVCSRSCGVGVRSSERQCTQPVPKNKGKYCVGERKRYRLCNLQACP. Asparagine 619 carries N-linked (GlcNAc...) asparagine glycosylation. Residues 680–791 form a spacer region; the sequence is HTVSRTFKEA…PGVHYKYTIQ (112 aa). TSP type-1 domains follow at residues 801 to 860, 861 to 917, and 922 to 975; these read PEFS…EPCP, ARWW…IPCY, and CPSS…QPCQ. Disordered regions lie at residues 989 to 1035, 1077 to 1121, 1179 to 1234, and 1255 to 1315; these read GSSS…LDPP, PPHI…SHSP, REDT…LSPD, and KPVH…APTD. Pro residues-rich tracts occupy residues 1005–1015 and 1079–1089; these read QPVPRPSPASS and HIRPTEPPSDS. Residues 1220 to 1232 show a composition bias toward low complexity; that stretch reads SSPSNSTTQASLS. The span at 1268-1280 shows a compositional bias: polar residues; it reads QIQTPHTEGTQSP. TSP type-1 domains are found at residues 1320–1368, 1371–1431, 1433–1476, and 1478–1538; these read KNAS…RHCH, PCAA…QPCL, WYTS…PCNT, and PCTQ…EDCE. One can recognise a PLAC domain in the interval 1541–1581; it reads EPSRCERDRLPFNFCETLRLLGRCQLPTIRAQCCRSCPPLS.

As to quaternary structure, interacts with COMP. Zn(2+) serves as cofactor. Post-translationally, glycosylated. Can be O-fucosylated by POFUT2 on a serine or a threonine residue found within the consensus sequence C1-X(2)-(S/T)-C2-G of the TSP type-1 repeat domains where C1 and C2 are the first and second cysteine residue of the repeat, respectively. Fucosylated repeats can then be further glycosylated by the addition of a beta-1,3-glucose residue by the glucosyltransferase, B3GALTL. Fucosylation mediates the efficient secretion of ADAMTS family members. Can also be C-glycosylated with one or two mannose molecules on tryptophan residues within the consensus sequence W-X-X-W of the TPRs. N- and C-glycosylations can also facilitate secretion. O-glycosylated proteoglycan; contains chondroitin sulfate. In terms of processing, may be cleaved by a furin endopeptidase. The precursor is sequentially processed. Detected in liver, ovary, kidney, testicle, lung and embryo.

It is found in the secreted. The protein localises to the extracellular space. Its subcellular location is the extracellular matrix. In terms of biological role, metalloprotease. Was previously shown to degrade COMP. However, a later study found no activity against COMP. The sequence is that of A disintegrin and metalloproteinase with thrombospondin motifs 7 (Adamts7) from Rattus norvegicus (Rat).